The primary structure comprises 100 residues: Urease subunit gamma (100 aa).

The protein belongs to the urease gamma subunit family. Heterotrimer of UreA (gamma), UreB (beta) and UreC (alpha) subunits. Three heterotrimers associate to form the active enzyme.

It is found in the cytoplasm. The enzyme catalyses urea + 2 H2O + H(+) = hydrogencarbonate + 2 NH4(+). Its pathway is nitrogen metabolism; urea degradation; CO(2) and NH(3) from urea (urease route): step 1/1. The polypeptide is Urease subunit gamma (Klebsiella pneumoniae).